Reading from the N-terminus, the 497-residue chain is NADH-quinone oxidoreductase subunit N (497 aa).

Transmembrane regions (helical) follow at residues 12–32, 40–60, 80–100, 116–136, 166–186, 208–228, 240–260, 284–304, 316–336, 341–361, 383–403, 430–450, and 457–477; these read MAPE…DLAL, PLAW…AAMI, AFKF…AEWA, LFAL…TLFV, VING…VFGL, LALA…TVPF, PVPA…ALLL, MQPI…VVAL, SGIA…WAMI, MYLL…AHIV, AAAL…AGFI, TVIS…RPTF, and LPAG…AIGW.

Belongs to the complex I subunit 2 family. As to quaternary structure, NDH-1 is composed of 14 different subunits. Subunits NuoA, H, J, K, L, M, N constitute the membrane sector of the complex.

It is found in the cell membrane. It carries out the reaction a quinone + NADH + 5 H(+)(in) = a quinol + NAD(+) + 4 H(+)(out). NDH-1 shuttles electrons from NADH, via FMN and iron-sulfur (Fe-S) centers, to quinones in the respiratory chain. The immediate electron acceptor for the enzyme in this species is believed to be a menaquinone. Couples the redox reaction to proton translocation (for every two electrons transferred, four hydrogen ions are translocated across the cytoplasmic membrane), and thus conserves the redox energy in a proton gradient. This is NADH-quinone oxidoreductase subunit N from Geobacillus kaustophilus (strain HTA426).